Here is a 527-residue protein sequence, read N- to C-terminus: Rhesus-like glycoprotein A (527 aa).

Over methionine 1 to proline 18 the chain is Cytoplasmic. The chain crosses the membrane as a helical span at residues isoleucine 19–leucine 39. At threonine 40–tyrosine 70 the chain is on the extracellular side. The N-linked (GlcNAc...) asparagine glycan is linked to asparagine 47. The chain crosses the membrane as a helical span at residues glycine 71 to leucine 91. At arginine 92–leucine 99 the chain is on the cytoplasmic side. Residues glycine 100–phenylalanine 120 form a helical membrane-spanning segment. The Extracellular segment spans residues glutamate 121–aspartate 141. A helical membrane pass occupies residues serine 142–glycine 162. Topologically, residues arginine 163–proline 166 are cytoplasmic. A helical membrane pass occupies residues leucine 167 to glycine 187. The Extracellular segment spans residues glutamate 188 to aspartate 195. A helical membrane pass occupies residues valine 196–phenylalanine 216. Over leucine 217–asparagine 236 the chain is Cytoplasmic. A helical transmembrane segment spans residues phenylalanine 237–alanine 257. At proline 258–glutamine 263 the chain is on the extracellular side. A helical transmembrane segment spans residues phenylalanine 264–valine 284. Topologically, residues serine 285–histidine 299 are cytoplasmic. A helical transmembrane segment spans residues valine 300–isoleucine 319. At asparagine 320–proline 321 the chain is on the extracellular side. Residues glycine 322 to isoleucine 342 form a helical membrane-spanning segment. The Cytoplasmic segment spans residues threonine 343–glycine 357. The helical transmembrane segment at isoleucine 358 to isoleucine 378 threads the bilayer. Over lysine 379–asparagine 406 the chain is Extracellular. Residues leucine 407–isoleucine 427 form a helical membrane-spanning segment. Over leucine 428–isoleucine 527 the chain is Cytoplasmic. The segment at serine 471–isoleucine 527 is disordered. The span at glycine 483–lysine 495 shows a compositional bias: basic and acidic residues. Residues serine 514 to isoleucine 527 show a composition bias toward acidic residues.

The protein belongs to the ammonium transporter (TC 2.A.49) family. Rh subfamily. As to quaternary structure, interacts with ap1g1.

Its subcellular location is the contractile vacuole. It localises to the membrane. Its function is as follows. May be a carbon dioxide/bicarbonate transporter. The protein is Rhesus-like glycoprotein A (rhgA) of Dictyostelium discoideum (Social amoeba).